The following is a 523-amino-acid chain: GMP synthase [glutamine-hydrolyzing] (523 aa).

The Glutamine amidotransferase type-1 domain maps to 8-205 (KILILDFGSQ…VVGICGCECK (198 aa)). Cys-85 acts as the Nucleophile in catalysis. Residues His-179 and Glu-181 contribute to the active site. The 193-residue stretch at 206–398 (WTAENIIEDA…LGLPAEMLNR (193 aa)) folds into the GMPS ATP-PPase domain. Residue 233–239 (SGGVDSS) participates in ATP binding.

In terms of assembly, homodimer.

The enzyme catalyses XMP + L-glutamine + ATP + H2O = GMP + L-glutamate + AMP + diphosphate + 2 H(+). Its pathway is purine metabolism; GMP biosynthesis; GMP from XMP (L-Gln route): step 1/1. In terms of biological role, catalyzes the synthesis of GMP from XMP. In Actinobacillus pleuropneumoniae serotype 3 (strain JL03), this protein is GMP synthase [glutamine-hydrolyzing].